The sequence spans 483 residues: Phloretin 2'-O-glucosyltransferase (483 aa).

The active-site Proton acceptor is His-15. His-15 serves as a coordination point for an anthocyanidin. Asp-118 acts as the Charge relay in catalysis. The UDP-alpha-D-glucose site is built by Thr-140, Ala-360, Gln-362, His-377, Trp-380, Asn-381, Ser-382, and Glu-385. An an anthocyanidin-binding site is contributed by Ala-400. Glu-401 and Gln-402 together coordinate UDP-alpha-D-glucose.

It belongs to the UDP-glycosyltransferase family.

It carries out the reaction phloretin + UDP-alpha-D-glucose = phlorizin + UDP + H(+). Glycosyltransferase that possesses phloretin 2'-O-glycosyltransferase activity. Converts phloretin to phlorizin (phloretin 2'-O-glucoside), a potent antioxidant. Is specific for phloretin and does not possess glycosyltransferase activity toward naringenin, naringenin chalcone, eriodictyol, eriodictyol chalcone, apigenin, luteolin, kaempferol, quercetin, isoliquiritigenin, butein, caffeic acid, 2-coumaric acid, 3-coumaric acid, 3-hydroxybenzoic acid, 3,4-dihydroxybenzoic acid and 3,4-dihydroxyhydrocinnamic acid. Can glycosylate phloretin in the presence of UDP-glucose, UDP-xylose and UDP-galactose. The protein is Phloretin 2'-O-glucosyltransferase of Pyrus communis (Pear).